Here is a 338-residue protein sequence, read N- to C-terminus: DNA-directed RNA polymerase subunit alpha (338 aa).

The interval 1–225 (MLISQRPTIT…ELFGLARELN (225 aa)) is alpha N-terminal domain (alpha-NTD). The interval 242-338 (YIAAYSMPIE…YIDVEAEDSE (97 aa)) is alpha C-terminal domain (alpha-CTD). The tract at residues 319-338 (LEGYDAETGGYIDVEAEDSE) is disordered.

This sequence belongs to the RNA polymerase alpha chain family. As to quaternary structure, homodimer. The RNAP catalytic core consists of 2 alpha, 1 beta, 1 beta' and 1 omega subunit. When a sigma factor is associated with the core the holoenzyme is formed, which can initiate transcription.

It carries out the reaction RNA(n) + a ribonucleoside 5'-triphosphate = RNA(n+1) + diphosphate. Its function is as follows. DNA-dependent RNA polymerase catalyzes the transcription of DNA into RNA using the four ribonucleoside triphosphates as substrates. This Corynebacterium glutamicum (strain ATCC 13032 / DSM 20300 / JCM 1318 / BCRC 11384 / CCUG 27702 / LMG 3730 / NBRC 12168 / NCIMB 10025 / NRRL B-2784 / 534) protein is DNA-directed RNA polymerase subunit alpha.